The following is a 376-amino-acid chain: Guanine nucleotide-binding protein G(s) subunit alpha (376 aa).

The N-palmitoyl glycine moiety is linked to residue Gly-2. Cys-3 is lipidated: S-palmitoyl cysteine. One can recognise a G-alpha domain in the interval 36 to 376 (GTHRLLLLGA…RMHLRQYELL (341 aa)). Residues 39-52 (RLLLLGAGESGKST) form a G1 motif region. GTP-binding positions include 44–51 (GAGESGKS), 180–186 (LRCRVLT), 205–209 (DVGGQ), 274–277 (NKQD), and Ala-348. Mg(2+) is bound by residues Ser-51 and Thr-186. Positions 178 to 186 (DILRCRVLT) are G2 motif. Residues 201-210 (FHMFDVGGQR) form a G3 motif region. Positions 270–277 (ILFLNKQD) are G4 motif. The interval 346–351 (TCAVDT) is G5 motif.

Belongs to the G-alpha family. G(s) subfamily. In terms of assembly, g proteins are composed of 3 units; alpha, beta and gamma. The alpha chain contains the guanine nucleotide binding site.

In terms of biological role, guanine nucleotide-binding proteins (G proteins) are involved as modulators or transducers in various transmembrane signaling systems. The G(s) protein is involved in hormonal regulation of adenylate cyclase: it activates the cyclase in response to beta-adrenergic stimuli. This is Guanine nucleotide-binding protein G(s) subunit alpha from Lymnaea stagnalis (Great pond snail).